The sequence spans 491 residues: Probable glycine dehydrogenase (decarboxylating) subunit 2 (491 aa).

Residue Lys273 is modified to N6-(pyridoxal phosphate)lysine.

Belongs to the GcvP family. C-terminal subunit subfamily. The glycine cleavage system is composed of four proteins: P, T, L and H. In this organism, the P 'protein' is a heterodimer of two subunits. Pyridoxal 5'-phosphate serves as cofactor.

It carries out the reaction N(6)-[(R)-lipoyl]-L-lysyl-[glycine-cleavage complex H protein] + glycine + H(+) = N(6)-[(R)-S(8)-aminomethyldihydrolipoyl]-L-lysyl-[glycine-cleavage complex H protein] + CO2. The glycine cleavage system catalyzes the degradation of glycine. The P protein binds the alpha-amino group of glycine through its pyridoxal phosphate cofactor; CO(2) is released and the remaining methylamine moiety is then transferred to the lipoamide cofactor of the H protein. This is Probable glycine dehydrogenase (decarboxylating) subunit 2 from Bacillus cereus (strain ATCC 10987 / NRS 248).